The following is a 1432-amino-acid chain: uncharacterized protein (1432 aa).

Disordered regions lie at residues 1 to 72 (MDTI…NYYN), 208 to 237 (NKIENNNNNNNNKINNENNNEKNKNNNNGQ), 280 to 335 (ERNE…ENNL), 531 to 607 (IVKS…NNSS), 690 to 712 (QNKSPLISPSLSKSNTTTTTTTT), 738 to 801 (NNTL…NGGR), 896 to 950 (QSNN…SPPT), 1044 to 1076 (NINSNSNNNNNNNNNNNNNNNNNNNNYNNNNNN), and 1303 to 1359 (NNNN…NTTP). Low complexity-rich tracts occupy residues 14–72 (INNN…NYYN), 208–225 (NKIENNNNNNNNKINNEN), and 284–300 (LTSPASSLPSLPSLPSS). Over residues 315–325 (QEEEEEEEEED) the composition is skewed to acidic residues. Composition is skewed to low complexity over residues 536-575 (SSSNLNKINQNNQNNNNNNIINNNNNNNNQNNTTTNNKNK), 583-607 (DNNTVFNNNTTTTNNNNNNNNNNSS), 691-712 (NKSPLISPSLSKSNTTTTTTTT), 744-779 (NMNNNNNNNNNNNNNNNNNNNNNNNNNNNNNNNSNN), and 896-944 (QSNN…SSSN). Over residues 1311 to 1320 (NGNGNGGING) the composition is skewed to gly residues. Positions 1321 to 1333 (NNGNNSGSNNKEN) are enriched in low complexity. A compositionally biased stretch (gly residues) spans 1334-1346 (GGTGAGIGGGGGL). Low complexity predominate over residues 1347 to 1359 (QLPNNNNNNNTTP).

This is an uncharacterized protein from Dictyostelium discoideum (Social amoeba).